The sequence spans 592 residues: Glutamine--fructose-6-phosphate aminotransferase [isomerizing] (592 aa).

Cysteine 2 acts as the Nucleophile; for GATase activity in catalysis. Residues 2–217 (CGIVGYVGRD…DGEIADLTPD (216 aa)) form the Glutamine amidotransferase type-2 domain. 2 SIS domains span residues 277 to 416 (IPFK…EREN) and 441 to 582 (VAEK…VDQP). The active-site For Fru-6P isomerization activity is the lysine 587.

Homodimer.

Its subcellular location is the cytoplasm. It catalyses the reaction D-fructose 6-phosphate + L-glutamine = D-glucosamine 6-phosphate + L-glutamate. Its function is as follows. Catalyzes the first step in hexosamine metabolism, converting fructose-6P into glucosamine-6P using glutamine as a nitrogen source. In Aquifex aeolicus (strain VF5), this protein is Glutamine--fructose-6-phosphate aminotransferase [isomerizing].